The following is a 38-amino-acid chain: Large ribosomal subunit protein bL36 (38 aa).

It belongs to the bacterial ribosomal protein bL36 family.

The polypeptide is Large ribosomal subunit protein bL36 (Proteus mirabilis (strain HI4320)).